We begin with the raw amino-acid sequence, 345 residues long: Viral Fc-gamma receptor-like protein UL119 (345 aa).

The N-terminal stretch at 1-23 (MCSVLAIALVVALLGDMHPGVKS) is a signal peptide. Residues 23–43 (SSTTSAVTSPSNTTVTSTTSI) form a disordered region. At 24–293 (STTSAVTSPS…IKSDPLFEDR (270 aa)) the chain is on the virion surface side. N-linked (GlcNAc...) asparagine; by host glycans are attached at residues Asn34, Asn48, Asn95, Asn104, Asn148, Asn179, Asn198, Asn217, Asn225, Asn241, Asn244, and Asn260. One can recognise an Ig-like V-type domain in the interval 91–190 (QVSLNATCKV…TWDLFTYPIY (100 aa)). A helical transmembrane segment spans residues 294–314 (LLAYGVLAFLVFMVIILLYVT). Topologically, residues 315–345 (YMLARRRDWSYKRLEEPVEEKKHPVPYFKQW) are intravirion.

The protein localises to the virion membrane. Its function is as follows. Serves as a receptor for the Fc part of human IgG. May thus be involved in interfering with host Ig-mediated immune responses. This Homo sapiens (Human) protein is Viral Fc-gamma receptor-like protein UL119 (UL119/UL118).